A 234-amino-acid chain; its full sequence is Meiotically up-regulated gene 35 protein (234 aa).

Positions 126–156 are enriched in basic and acidic residues; the sequence is DSSGDLTSTDKERDVSPVSHSEKPYWDRYDL. Positions 126-176 are disordered; the sequence is DSSGDLTSTDKERDVSPVSHSEKPYWDRYDLDQPSNQDVEESRNLVQEPKH. Phosphoserine occurs at positions 127 and 128. Thr132 carries the post-translational modification Phosphothreonine. Ser141 is subject to Phosphoserine.

It is found in the cytoplasm. In terms of biological role, has a role in meiosis. This chain is Meiotically up-regulated gene 35 protein (mug35), found in Schizosaccharomyces pombe (strain 972 / ATCC 24843) (Fission yeast).